Here is a 297-residue protein sequence, read N- to C-terminus: Inosose dehydratase (297 aa).

The protein belongs to the IolE/MocC family. The cofactor is glutathione. Requires Co(2+) as cofactor. Mn(2+) is required as a cofactor.

It catalyses the reaction scyllo-inosose = 3D-3,5/4-trihydroxycyclohexane-1,2-dione + H2O. Its pathway is polyol metabolism; myo-inositol degradation into acetyl-CoA; acetyl-CoA from myo-inositol: step 2/7. In terms of biological role, catalyzes the dehydration of inosose (2-keto-myo-inositol, 2KMI or 2,4,6/3,5-pentahydroxycyclohexanone) to 3D-(3,5/4)-trihydroxycyclohexane-1,2-dione (D-2,3-diketo-4-deoxy-epi-inositol). The protein is Inosose dehydratase of Clostridium perfringens (strain ATCC 13124 / DSM 756 / JCM 1290 / NCIMB 6125 / NCTC 8237 / Type A).